Here is a 219-residue protein sequence, read N- to C-terminus: Ras-like protein 1 (219 aa).

Residue 15 to 22 (GDGGVGKS) participates in GTP binding. The Effector region motif lies at 37 to 45 (YDPTIEDSY). GTP-binding positions include 62-66 (DTAGQ) and 121-124 (NKCD). Position 216 is a cysteine methyl ester (Cys-216). Cys-216 is lipidated: S-farnesyl cysteine. A propeptide spans 217–219 (VIC) (removed in mature form).

This sequence belongs to the small GTPase superfamily. Ras family. Scd1, scd2, cdc42, and ras1, in its GTP-bound state, act cooperatively to form a protein complex. Post-translationally, palmitoylated by the erf2-erf4 complex.

It is found in the cell membrane. It catalyses the reaction GTP + H2O = GDP + phosphate + H(+). With respect to regulation, alternates between an inactive form bound to GDP and an active form bound to GTP. Activated by a guanine nucleotide-exchange factor (GEF) and inactivated by a GTPase-activating protein (GAP). In terms of biological role, participates in the process of sexual differentiation and the determination of cell shape. Essential for mating and for recognition of the mating pheromone, but not for vegetative growth. Does not regulate the intracellular cAMP level. Regulates two downstream pathways, namely the byr2/byr1/spk1 mitogen-activated protein kinase cascade and the cdc42 small G protein pathway. The former is relevant to mating and sporulation, whereas the latter is relevant to mating, cell growth and cell morphology. This chain is Ras-like protein 1 (ras1), found in Schizosaccharomyces pombe (strain 972 / ATCC 24843) (Fission yeast).